Reading from the N-terminus, the 88-residue chain is Small ribosomal subunit protein bS20 (88 aa).

Positions Met-1–Met-27 are disordered.

The protein belongs to the bacterial ribosomal protein bS20 family.

Binds directly to 16S ribosomal RNA. The sequence is that of Small ribosomal subunit protein bS20 from Shewanella putrefaciens (strain CN-32 / ATCC BAA-453).